Here is a 592-residue protein sequence, read N- to C-terminus: MLRRALEEAIAQALKEMGVPVRLKVARAPKDKPGDYGVPLFALAKELRKPPQAIAQELKDRLPLPEFVEEAVPVGGYLNFRLRTEALLREALRPKAPFPRRPGVVLVEHTSVNPNKELHVGHLRNIALGDAIARILAYAGREVLVLNYIDDTGRQAAETLFALRHYGLTWDGKEKYDHFAGRAYVRLHQDPEYERLQPAIEEVLHALERGELREEVNRILLAQMATMHALNARYDLLVWESDIVRAGLLQKALALLEQSPHVFRPREGKYAGALVMDASPVIPGLEDPFFVLLRSNGTATYYAKDIAFQFWKMGILEGLRFRPYENPYYPGLRTSAPEGEAYTPKAEETINVVDVRQSHPQALVRAALALAGYPALAEKAHHLAYETVLLEGRQMSGRKGLAVSVDEVLEEATRRARAIVEEKNPDHPDKEEAARMVALGAIRFSMVKTEPKKQIDFRYQEALSFEGDTGPYVQYAHARAHSILRKAGEWGAPDLSQATPYERALALDLLDFEEAVLEAAEERTPHVLAQYLLDLAASWNAYYNARENGQPATPVLTAPEGLRELRLSLVQSLQRTLATGLDLLGIPAPEVM.

The 'HIGH' region signature appears at 112–122; sequence VNPNKELHVGH.

Belongs to the class-I aminoacyl-tRNA synthetase family. As to quaternary structure, monomer.

It localises to the cytoplasm. The enzyme catalyses tRNA(Arg) + L-arginine + ATP = L-arginyl-tRNA(Arg) + AMP + diphosphate. This Thermus thermophilus (strain ATCC 27634 / DSM 579 / HB8) protein is Arginine--tRNA ligase.